We begin with the raw amino-acid sequence, 526 residues long: Butyrophilin subfamily 1 member A1 (526 aa).

The signal sequence occupies residues 1–26 (MAVFPNSCLAGCLLIFILLQLPKLDS). 2 Ig-like V-type domains span residues 27 to 140 (APFD…VHLK) and 148 to 234 (PHIS…VEVS). The Extracellular portion of the chain corresponds to 27–242 (APFDVIGPQE…VSIPASFFPR (216 aa)). 2 disulfide bridges follow: cysteine 50/cysteine 124 and cysteine 164/cysteine 218. An N-linked (GlcNAc...) (complex) asparagine glycan is attached at asparagine 55. N-linked (GlcNAc...) (hybrid) asparagine glycosylation occurs at asparagine 215. A helical membrane pass occupies residues 243 to 269 (LTPWMVAVAVILVVLGLLTIGSIFFTW). The Cytoplasmic segment spans residues 270–526 (RLYKERSRQR…IPLQPSQGVP (257 aa)). Positions 285-479 (SKEKLLEELK…LTICPVTDGL (195 aa)) constitute a B30.2/SPRY domain.

The protein belongs to the immunoglobulin superfamily. BTN/MOG family. Seems to associate with xanthine dehydrogenase/oxidase. As to expression, expressed in mammary tissue.

The protein resides in the membrane. Functionally, may function in the secretion of milk-fat droplets. May act as a specific membrane-associated receptor for the association of cytoplasmic droplets with the apical plasma membrane. Inhibits the proliferation of CD4 and CD8 T-cells activated by anti-CD3 antibodies, T-cell metabolism and IL2 and IFNG secretion. This is Butyrophilin subfamily 1 member A1 (BTN1A1) from Bos taurus (Bovine).